We begin with the raw amino-acid sequence, 140 residues long: PDZ domain-containing protein 11 (140 aa).

A PDZ domain is found at 47–129 (IVTLKKPPGA…ISMRVRFFPY (83 aa)).

Interacts with ATP2B1, ATP2B2, ATP2B3, ATP2B4 and ATP7A. Interacts with PLEKHA7 (via WW domains) at zonula adherens; this interaction is essential for the interaction between PLEKHA7 and the ADAM10-binding protein TSPAN33. Interacts with SLC5A6.

It is found in the cytoplasm. It localises to the cell junction. The protein localises to the adherens junction. Its subcellular location is the cell membrane. In terms of biological role, mediates docking of ADAM10 to zonula adherens by interacting with PLEKHA7 which is required for PLEKHA7 to interact with the ADAM10-binding protein TSPAN33. This Mus musculus (Mouse) protein is PDZ domain-containing protein 11 (Pdzd11).